The chain runs to 150 residues: MNKTSVPSPDSIDRQWFLVDAENQTLGRLATEVASVLRGKTKPNFTPHLDTGDFVIVVNAEKIKVTGKKSDQKLYRRHSGRPGGMKVETFKALQSRIPERIVEKAIKGMLPHTRLGRQLFTKLKVYKGSDHPHSAQEPKILSLNSESVTK.

The segment at 128–150 (GSDHPHSAQEPKILSLNSESVTK) is disordered.

Belongs to the universal ribosomal protein uL13 family. In terms of assembly, part of the 50S ribosomal subunit.

This protein is one of the early assembly proteins of the 50S ribosomal subunit, although it is not seen to bind rRNA by itself. It is important during the early stages of 50S assembly. The sequence is that of Large ribosomal subunit protein uL13 from Prochlorococcus marinus (strain NATL1A).